Reading from the N-terminus, the 300-residue chain is HTH-type transcriptional regulator ArgP (300 aa).

An HTH lysR-type domain is found at 4–60; the sequence is PDYRTLQALDAVIRERGFERAAQKLCITQSAVSQRIKQLENLFGQPLLVRTVPPRPT. Residues 21-40 constitute a DNA-binding region (H-T-H motif); that stretch reads FERAAQKLCITQSAVSQRIK.

Belongs to the LysR transcriptional regulatory family. Homodimer.

In terms of biological role, controls the transcription of genes involved in arginine and lysine metabolism. This Photorhabdus laumondii subsp. laumondii (strain DSM 15139 / CIP 105565 / TT01) (Photorhabdus luminescens subsp. laumondii) protein is HTH-type transcriptional regulator ArgP.